The following is a 61-amino-acid chain: Short neurotoxin 2 (61 aa).

Cystine bridges form between cysteine 3/cysteine 23, cysteine 17/cysteine 40, cysteine 42/cysteine 53, and cysteine 54/cysteine 59.

This sequence belongs to the three-finger toxin family. Short-chain subfamily. Type I alpha-neurotoxin sub-subfamily. As to expression, expressed by the venom gland.

The protein localises to the secreted. In terms of biological role, binds to muscle nicotinic acetylcholine receptor (nAChR) and inhibit acetylcholine from binding to the receptor, thereby impairing neuromuscular transmission. This is Short neurotoxin 2 from Naja haje haje (Egyptian cobra).